A 105-amino-acid polypeptide reads, in one-letter code: MRLYTEYIPNKNKLINQQQYHSDLQDLLHQWILQLLQLDVLPLSNRKYQSSRCHPKSVGEYLIVVRAIDALGNSQPLTSRRNQVSRAMTFVQNSLNEENLHPNID.

This is an uncharacterized protein from Bacillus subtilis (strain 168).